Consider the following 50-residue polypeptide: Sproutin (50 aa).

Ser-8 bears the Phosphoserine; by PKC mark.

As to expression, brain.

Functionally, neurite outgrowth factor. The sequence is that of Sproutin from Rattus norvegicus (Rat).